The following is a 3461-amino-acid chain: Reelin (3461 aa).

An N-terminal signal peptide occupies residues 1–26 (MERGCWAPRALVLAVLLLLATLRARA). The Reelin domain occupies 27–191 (ATGYYPRFSP…GAPTEATAYS (165 aa)). The cysteines at positions 41 and 127 are disulfide-linked. Asparagine 141 carries an N-linked (GlcNAc...) asparagine glycan. Cysteine 155 and cysteine 179 form a disulfide bridge. Asparagine 258, asparagine 290, and asparagine 306 each carry an N-linked (GlcNAc...) asparagine glycan. A disulfide bridge links cysteine 540 with cysteine 581. One copy of the BNR 1 repeat lies at 593–604 (EFSTNHGRSWSL). The cysteines at positions 609 and 614 are disulfide-linked. N-linked (GlcNAc...) asparagine glycosylation occurs at asparagine 629. Residues 671-702 (IGPSCLKFCSGRGQCTRHGCKCDPGFSGPACE) form the EGF-like 1 domain. 2 disulfide bridges follow: cysteine 675/cysteine 685 and cysteine 692/cysteine 701. Residues 799-810 (HYSYDNGITWKL) form a BNR 2 repeat. A disulfide bond links cysteine 895 and cysteine 937. Residues 952 to 963 (EYSANHGLTWHL) form a BNR 3 repeat. 3 disulfide bridges follow: cysteine 968–cysteine 975, cysteine 1034–cysteine 1044, and cysteine 1051–cysteine 1060. The 32-residue stretch at 1030 to 1061 (IGQQCPNMCSGHGSCDHGVCRCDQGYQGTECH) folds into the EGF-like 2 domain. The stretch at 1157-1168 (QYSNNGGIQWHL) is one BNR 4 repeat. Residue asparagine 1267 is glycosylated (N-linked (GlcNAc...) asparagine). Residues 1323–1334 (QYSHDAGMSWFL) form a BNR 5 repeat. Intrachain disulfides connect cysteine 1339–cysteine 1348, cysteine 1413–cysteine 1423, cysteine 1417–cysteine 1428, and cysteine 1430–cysteine 1441. The EGF-like 3 domain occupies 1409 to 1442 (ISEPCPSYCSGHGDCISGVCFCDLGYTAAQGTCV). N-linked (GlcNAc...) asparagine glycosylation occurs at asparagine 1447. The cysteines at positions 1475 and 1522 are disulfide-linked. One copy of the BNR 6 repeat lies at 1535-1546 (QYSNDNGILWHL). Residue asparagine 1600 is glycosylated (N-linked (GlcNAc...) asparagine). Cysteine 1633 and cysteine 1673 are oxidised to a cystine. A BNR 7 repeat occupies 1686-1697 (QYSLNNGKDWQL). Cysteine 1702 and cysteine 1709 are disulfide-bonded. Asparagine 1750 carries an N-linked (GlcNAc...) asparagine glycan. Residues 1765–1796 (LASGCPWMCSGRGICDSGRCVCDRGFGGPFCV) enclose the EGF-like 4 domain. A BNR 8 repeat occupies 1884-1895 (QFSVSGGVTWHL). The N-linked (GlcNAc...) asparagine glycan is linked to asparagine 1921. An intrachain disulfide couples cysteine 1983 to cysteine 2030. Residues 2043-2054 (EFSRDFGATWHL) form a BNR 9 repeat. Residues cysteine 2059 and cysteine 2070 are joined by a disulfide bond. Zn(2+) is bound by residues histidine 2061 and histidine 2074. Residues 2129–2161 (IGPQCEEMCYGHGSCINGTKCICDPGYSGPTCK) form the EGF-like 5 domain. Intrachain disulfides connect cysteine 2133/cysteine 2143, cysteine 2137/cysteine 2149, and cysteine 2151/cysteine 2160. An N-linked (GlcNAc...) asparagine glycan is attached at asparagine 2145. Residue glutamate 2179 participates in Zn(2+) binding. Residues cysteine 2195 and cysteine 2235 are joined by a disulfide bond. A BNR 10 repeat occupies 2250 to 2261 (QYSLNGGLSWSL). Glutamate 2264 lines the Zn(2+) pocket. Residues asparagine 2269 and asparagine 2317 are each glycosylated (N-linked (GlcNAc...) asparagine). Disulfide bonds link cysteine 2348-cysteine 2387, cysteine 2393-cysteine 2559, cysteine 2482-cysteine 2492, cysteine 2486-cysteine 2497, cysteine 2499-cysteine 2508, and cysteine 2544-cysteine 2584. Zn(2+) contacts are provided by glutamate 2397, glutamate 2399, and histidine 2460. A BNR 11 repeat occupies 2399 to 2410 (EYSVDLGLSWHP). The region spanning 2478–2509 (IGDGCLDMCSGHGRCVQGSCVCDEQWGGLYCD) is the EGF-like 6 domain. Residue asparagine 2569 is glycosylated (N-linked (GlcNAc...) asparagine). 2 BNR repeats span residues 2598-2609 (EYSVNGGITWNL) and 2778-2789 (QFSTDFGVSWSY). A disulfide bridge links cysteine 2794 with cysteine 2801. The region spanning 2853–2884 (LGPGCLDNCGGHGDCLKEQCICDPGYSGPNCY) is the EGF-like 7 domain. Cysteine 2919 and cysteine 2966 are disulfide-bonded. N-linked (GlcNAc...) asparagine glycosylation occurs at asparagine 2962. The BNR 14 repeat unit spans residues 2979–2990 (DFSTDGGITWTL). Asparagine 3016 and asparagine 3073 each carry an N-linked (GlcNAc...) asparagine glycan. A BNR 15 repeat occupies 3143–3155 (EYTKDARSDSWQL). The cysteines at positions 3160 and 3170 are disulfide-linked. Asparagine 3185 carries N-linked (GlcNAc...) asparagine glycosylation. One can recognise an EGF-like 8 domain in the interval 3228 to 3260 (IGEACPKLCSGHGYCTTGAVCICDESFQGDDCS). Intrachain disulfides connect cysteine 3232/cysteine 3242, cysteine 3236/cysteine 3248, cysteine 3250/cysteine 3259, and cysteine 3296/cysteine 3346. Residues 3363-3374 (QYSVNNGITWHV) form a BNR 16 repeat. Residues asparagine 3412 and asparagine 3439 are each glycosylated (N-linked (GlcNAc...) asparagine).

Belongs to the reelin family. In terms of assembly, oligomer of disulfide-linked homodimers. N-glycosylated and to a lesser extent also O-glycosylated. The major isoform 1 is neuron-specific. It is abundantly produced during brain ontogenesis by the Cajal-Retzius cells and other pioneer neurons located in the telencephalic marginal zone and by granule cells of the external granular layer of the cerebellum. Expression is located in deeper layers in the developing hippocampus and olfactory bulb, low levels of expression are also detected in the immature striatum. At early developmental stages, expressed also in hypothalamic differentiation fields, tectum and spinal cord. A moderate to low level of expression occurs in the septal area, striatal fields, habenular nuclei, some thalamic nuclei, particularly the lateral geniculate, the retina and some nuclei of the reticular formation in the central field of the medulla. Very low levels found in liver and kidney. No expression in radial glial cells, cortical plate, Purkinje cells and inferior olivary neurons. The minor isoform 2 is only expressed in non neuronal cells. The minor isoform 3 is found in the same cells as isoform 1, but is almost undetectable in retina and brain stem.

The protein localises to the secreted. It localises to the extracellular space. Its subcellular location is the extracellular matrix. Functionally, extracellular matrix serine protease secreted by pioneer neurons that plays a role in layering of neurons in the cerebral cortex and cerebellum by coordinating cell positioning during neurodevelopment. Regulates microtubule function in neurons and neuronal migration. Binding to the extracellular domains of lipoprotein receptors VLDLR and LRP8/APOER2 induces tyrosine phosphorylation of DAB1 and modulation of TAU phosphorylation. Affects migration of sympathetic preganglionic neurons in the spinal cord, where it seems to act as a barrier to neuronal migration. Enzymatic activity is important for the modulation of cell adhesion. This is Reelin (Reln) from Mus musculus (Mouse).